A 512-amino-acid polypeptide reads, in one-letter code: UDP-N-acetylmuramate--L-alanine ligase (512 aa).

Residue 132–138 (GAHGKTT) participates in ATP binding.

It belongs to the MurCDEF family.

The protein resides in the cytoplasm. It carries out the reaction UDP-N-acetyl-alpha-D-muramate + L-alanine + ATP = UDP-N-acetyl-alpha-D-muramoyl-L-alanine + ADP + phosphate + H(+). The protein operates within cell wall biogenesis; peptidoglycan biosynthesis. Cell wall formation. This is UDP-N-acetylmuramate--L-alanine ligase from Bifidobacterium longum subsp. infantis (strain ATCC 15697 / DSM 20088 / JCM 1222 / NCTC 11817 / S12).